A 106-amino-acid chain; its full sequence is Urease subunit beta (106 aa).

Belongs to the urease beta subunit family. Heterotrimer of UreA (gamma), UreB (beta) and UreC (alpha) subunits. Three heterotrimers associate to form the active enzyme.

It localises to the cytoplasm. It catalyses the reaction urea + 2 H2O + H(+) = hydrogencarbonate + 2 NH4(+). It functions in the pathway nitrogen metabolism; urea degradation; CO(2) and NH(3) from urea (urease route): step 1/1. The polypeptide is Urease subunit beta (Synechococcus sp. (strain WH7805)).